A 277-amino-acid polypeptide reads, in one-letter code: Acetyl-coenzyme A carboxylase carboxyl transferase subunit beta (277 aa).

The region spanning 25 to 277 (LVRRCPVCHT…DLLRLHKGES (253 aa)) is the CoA carboxyltransferase N-terminal domain. Zn(2+) contacts are provided by cysteine 29, cysteine 32, cysteine 47, and cysteine 50. The C4-type zinc-finger motif lies at 29 to 50 (CPVCHTTFLTDHWEPTRLCPAC).

Belongs to the AccD/PCCB family. In terms of assembly, acetyl-CoA carboxylase is a heterohexamer composed of biotin carboxyl carrier protein (AccB), biotin carboxylase (AccC) and two subunits each of ACCase subunit alpha (AccA) and ACCase subunit beta (AccD). Zn(2+) is required as a cofactor.

It is found in the cytoplasm. The catalysed reaction is N(6)-carboxybiotinyl-L-lysyl-[protein] + acetyl-CoA = N(6)-biotinyl-L-lysyl-[protein] + malonyl-CoA. It functions in the pathway lipid metabolism; malonyl-CoA biosynthesis; malonyl-CoA from acetyl-CoA: step 1/1. Component of the acetyl coenzyme A carboxylase (ACC) complex. Biotin carboxylase (BC) catalyzes the carboxylation of biotin on its carrier protein (BCCP) and then the CO(2) group is transferred by the transcarboxylase to acetyl-CoA to form malonyl-CoA. The protein is Acetyl-coenzyme A carboxylase carboxyl transferase subunit beta of Levilactobacillus brevis (strain ATCC 367 / BCRC 12310 / CIP 105137 / JCM 1170 / LMG 11437 / NCIMB 947 / NCTC 947) (Lactobacillus brevis).